The chain runs to 337 residues: Probable cytosolic iron-sulfur protein assembly protein CIAO1 homolog (337 aa).

WD repeat units lie at residues 15-54 (DDTS…DSKM), 65-104 (SHTR…FAEV), 109-148 (GHES…DFSV), 154-193 (PHTQ…WVTQ), 199-238 (CHVG…SKSA), 253-292 (NTRW…ESPV), and 301-337 (RHEL…ELEI).

Belongs to the WD repeat CIA1 family.

Functionally, essential component of the cytosolic iron-sulfur (Fe/S) protein assembly machinery. Required for the maturation of extramitochondrial Fe/S proteins. This Caenorhabditis elegans protein is Probable cytosolic iron-sulfur protein assembly protein CIAO1 homolog.